The chain runs to 282 residues: PTS system sorbose-specific EIID component (282 aa).

Residues 13-281 (TKITKGDMFK…GIVGYWLGIL (269 aa)) form the PTS EIID domain. A run of 4 helical transmembrane segments spans residues 135–155 (LGAS…FVAF), 197–217 (GLFI…PLVV), 234–254 (ILDQ…CMYL), and 261–281 (PILL…LGIL).

The protein resides in the cell membrane. Its function is as follows. The phosphoenolpyruvate-dependent sugar phosphotransferase system (PTS), a major carbohydrate active transport system, catalyzes the phosphorylation of incoming sugar substrates concomitant with their translocation across the cell membrane. The enzyme II SorABCD PTS system is involved in L-sorbose transport. The protein is PTS system sorbose-specific EIID component of Lacticaseibacillus casei (Lactobacillus casei).